Reading from the N-terminus, the 259-residue chain is L-cysteine S-thiosulfotransferase subunit SoxA (259 aa).

The N-terminal stretch at 1-23 (MRKLWFLPILLGAVGGVSLYAIA) is a signal peptide. The Cytochrome c domain occupies 50 to 135 (VYAEQGRDMF…SIATYVATLS (86 aa)). Heme c is bound by residues cysteine 70, cysteine 73, histidine 74, cysteine 108, cysteine 171, cysteine 174, and histidine 175. A substrate-binding site is contributed by arginine 216. A heme c-binding site is contributed by cysteine 220. Cysteine 220 functions as the Cysteine persulfide intermediate in the catalytic mechanism.

Belongs to the SoxA family. As to quaternary structure, heterodimer of SoxA and SoxX. Heme c serves as cofactor. In terms of processing, cysteine persulfide at Cys-220.

It localises to the periplasm. The catalysed reaction is L-cysteinyl-[SoxY protein] + thiosulfate + 2 Fe(III)-[cytochrome c] = S-sulfosulfanyl-L-cysteinyl-[SoxY protein] + 2 Fe(II)-[cytochrome c] + 2 H(+). It catalyses the reaction S-sulfanyl-L-cysteinyl-[SoxY protein] + thiosulfate + 2 Fe(III)-[cytochrome c] = S-(2-sulfodisulfanyl)-L-cysteinyl-[SoxY protein] + 2 Fe(II)-[cytochrome c] + 2 H(+). Its function is as follows. C-type diheme cytochrome, which is part of the SoxAX cytochrome complex involved in sulfur oxidation. The SoxAX complex catalyzes the formation of a heterodisulfide bond between the conserved cysteine residue on a sulfur carrier SoxYZ complex subunit SoxY and thiosulfate or other inorganic sulfur substrates. This leads to the liberation of two electrons, which may be transferred from the SoxAX complex to another cytochrome c that then channels them into the respiratory electron transport chain. Some electrons may be used for reductive CO(2) fixation. The chain is L-cysteine S-thiosulfotransferase subunit SoxA from Hydrogenobacter thermophilus (strain DSM 6534 / IAM 12695 / TK-6).